Consider the following 238-residue polypeptide: Modulator of macroautophagy TMEM150B (238 aa).

At 1 to 8 the chain is on the cytoplasmic side; that stretch reads MWNYLSLL. Residues 9 to 29 form a helical membrane-spanning segment; that stretch reads PVILFLWAIAGIWIVFAIAVV. Residue Asn-30 is glycosylated (N-linked (GlcNAc...) asparagine). At 30–51 the chain is on the extracellular side; it reads NGSVDLNEGFPFISICGSYAPQ. The helical transmembrane segment at 52 to 72 threads the bilayer; the sequence is SCIFGQVLNIGAALTVWICIV. The Cytoplasmic segment spans residues 73–86; the sequence is RHHQLRDWGVKTWQ. The helical transmembrane segment at 87–107 threads the bilayer; sequence NQLILWSGILCALGTSIVGNF. The Extracellular portion of the chain corresponds to 108 to 116; the sequence is QDKNQKPTH. Residues 117–137 form a helical membrane-spanning segment; it reads LAGAFLAFILGNLYFWLQFFL. Residues 138-156 are Cytoplasmic-facing; it reads SWWVKGLPQPGPHWIKSLR. The chain crosses the membrane as a helical span at residues 157–177; the sequence is LSLCSLSTILIVAMIVLHALH. Topologically, residues 178–186 are extracellular; it reads MRSASAICE. A helical transmembrane segment spans residues 187-207; that stretch reads WVVAMLLFMLFGFFAVDFSIL. Residues 208–238 are Cytoplasmic-facing; sequence RGCTLHLHPRLDSSLPQAPSGSPNIQMAQVL.

Belongs to the DRAM/TMEM150 family.

It localises to the cell membrane. It is found in the endosome membrane. The protein localises to the cytoplasmic vesicle. The protein resides in the autophagosome membrane. Functionally, modulator of macroautophagy that causes accumulation of autophagosomes under basal conditions and enhances autophagic flux. Represses cell death and promotes long-term clonogenic survival of cells grown in the absence of glucose in a macroautophagy-independent manner. May have some role in extracellular matrix engulfment or growth factor receptor recycling, both of which can modulate cell survival. This chain is Modulator of macroautophagy TMEM150B, found in Mus musculus (Mouse).